The primary structure comprises 236 residues: 2-C-methyl-D-erythritol 4-phosphate cytidylyltransferase (236 aa).

It belongs to the IspD/TarI cytidylyltransferase family. IspD subfamily. In terms of assembly, homodimer.

The catalysed reaction is 2-C-methyl-D-erythritol 4-phosphate + CTP + H(+) = 4-CDP-2-C-methyl-D-erythritol + diphosphate. It participates in isoprenoid biosynthesis; isopentenyl diphosphate biosynthesis via DXP pathway; isopentenyl diphosphate from 1-deoxy-D-xylulose 5-phosphate: step 2/6. Its function is as follows. Catalyzes the formation of 4-diphosphocytidyl-2-C-methyl-D-erythritol from CTP and 2-C-methyl-D-erythritol 4-phosphate (MEP). The chain is 2-C-methyl-D-erythritol 4-phosphate cytidylyltransferase from Escherichia coli O7:K1 (strain IAI39 / ExPEC).